A 196-amino-acid polypeptide reads, in one-letter code: Chromophore lyase CpcT/CpeT (196 aa).

It belongs to the CpcT/CpeT biliprotein lyase family.

Its function is as follows. Covalently attaches a chromophore to Cys residue(s) of phycobiliproteins. This chain is Chromophore lyase CpcT/CpeT, found in Thermosynechococcus vestitus (strain NIES-2133 / IAM M-273 / BP-1).